The following is a 272-amino-acid chain: 2-amino-3,7-dideoxy-D-threo-hept-6-ulosonate synthase (272 aa).

Residue D33 is the Proton acceptor of the active site. 1-deoxy-D-threo-hexo-2,5-diulose 6-phosphate contacts are provided by residues 33–37 and 153–155; these read DHGVS and YPR. The Proton donor role is filled by Y153. The active-site Schiff-base intermediate with substrate is the K184. Residues 209-210 and 237-238 contribute to the 1-deoxy-D-threo-hexo-2,5-diulose 6-phosphate site; these read GG and GR.

The protein belongs to the DeoC/FbaB aldolase family. ADHS subfamily. In terms of assembly, homodecamer.

The catalysed reaction is 1-deoxy-D-threo-hexo-2,5-diulose 6-phosphate + L-aspartate 4-semialdehyde = 2,3-dioxopropyl phosphate + 2-amino-2,3,7-trideoxy-D-lyxo-hept-6-ulosonate. Functionally, catalyzes a transaldol reaction between 6-deoxy-5-ketofructose 1-phosphate (DKFP) and L-aspartate semialdehyde (ASA) with an elimination of hydroxypyruvaldehyde phosphate to yield 2-amino-3,7-dideoxy-D-threo-hept-6-ulosonate (ADH). Plays a key role in an alternative pathway of the biosynthesis of 3-dehydroquinate (DHQ), which is involved in the canonical pathway for the biosynthesis of aromatic amino acids. This Methanococcus maripaludis (strain C5 / ATCC BAA-1333) protein is 2-amino-3,7-dideoxy-D-threo-hept-6-ulosonate synthase.